A 386-amino-acid polypeptide reads, in one-letter code: Putative matrix metalloproteinase (386 aa).

Residues 1–34 (MPTAHFQHSIRYLNVTNMLIFSIISFLLIYQTNS) form the signal peptide. Asn-14 and Asn-58 each carry an N-linked (GlcNAc...) asparagine; by host glycan. His-186 lines the Zn(2+) pocket. Glu-187 is an active-site residue. His-190 and His-196 together coordinate Zn(2+). Residues 235 to 258 (NEQSTHQSTRHRPHRRPSPDGSCR) are disordered.

It belongs to the peptidase M10A family. Requires Zn(2+) as cofactor.

This Spodoptera frugiperda (Fall armyworm) protein is Putative matrix metalloproteinase.